The following is a 213-amino-acid chain: Thiamine-phosphate synthase (213 aa).

4-amino-2-methyl-5-(diphosphooxymethyl)pyrimidine contacts are provided by residues 40–44 (QFREK) and N75. Mg(2+) is bound by residues D76 and D95. A 4-amino-2-methyl-5-(diphosphooxymethyl)pyrimidine-binding site is contributed by S113. 139 to 141 (TPS) is a 2-[(2R,5Z)-2-carboxy-4-methylthiazol-5(2H)-ylidene]ethyl phosphate binding site. Residue K142 coordinates 4-amino-2-methyl-5-(diphosphooxymethyl)pyrimidine. Residues G171 and 191-192 (IS) each bind 2-[(2R,5Z)-2-carboxy-4-methylthiazol-5(2H)-ylidene]ethyl phosphate.

It belongs to the thiamine-phosphate synthase family. Mg(2+) serves as cofactor.

The enzyme catalyses 2-[(2R,5Z)-2-carboxy-4-methylthiazol-5(2H)-ylidene]ethyl phosphate + 4-amino-2-methyl-5-(diphosphooxymethyl)pyrimidine + 2 H(+) = thiamine phosphate + CO2 + diphosphate. The catalysed reaction is 2-(2-carboxy-4-methylthiazol-5-yl)ethyl phosphate + 4-amino-2-methyl-5-(diphosphooxymethyl)pyrimidine + 2 H(+) = thiamine phosphate + CO2 + diphosphate. It catalyses the reaction 4-methyl-5-(2-phosphooxyethyl)-thiazole + 4-amino-2-methyl-5-(diphosphooxymethyl)pyrimidine + H(+) = thiamine phosphate + diphosphate. Its pathway is cofactor biosynthesis; thiamine diphosphate biosynthesis; thiamine phosphate from 4-amino-2-methyl-5-diphosphomethylpyrimidine and 4-methyl-5-(2-phosphoethyl)-thiazole: step 1/1. Its function is as follows. Condenses 4-methyl-5-(beta-hydroxyethyl)thiazole monophosphate (THZ-P) and 2-methyl-4-amino-5-hydroxymethyl pyrimidine pyrophosphate (HMP-PP) to form thiamine monophosphate (TMP). The polypeptide is Thiamine-phosphate synthase (Staphylococcus aureus (strain MSSA476)).